The chain runs to 965 residues: Pullulanase 1, chloroplastic (965 aa).

The N-terminal 62 residues, 1-62 (MALTLTPTSS…SKTSLHCLCS (62 aa)), are a transit peptide targeting the chloroplast. Aspartate 552 acts as the Nucleophile in catalysis. The active-site Proton donor is glutamate 589.

Belongs to the glycosyl hydrolase 13 family.

Its subcellular location is the plastid. The protein localises to the chloroplast stroma. The enzyme catalyses Hydrolysis of (1-&gt;6)-alpha-D-glucosidic linkages in alpha- and beta-limit dextrins of amylopectin and glycogen, and in amylopectin and pullulan.. Its pathway is glycan biosynthesis; starch biosynthesis. The protein operates within glycan degradation; starch degradation. In terms of biological role, involved in starch degradation and also probably in the trimming of pre-amylopectin chains during starch synthesis. The sequence is that of Pullulanase 1, chloroplastic (PU1) from Arabidopsis thaliana (Mouse-ear cress).